Here is a 230-residue protein sequence, read N- to C-terminus: UPF0173 metal-dependent hydrolase Dshi_2788 (230 aa).

It belongs to the UPF0173 family.

The polypeptide is UPF0173 metal-dependent hydrolase Dshi_2788 (Dinoroseobacter shibae (strain DSM 16493 / NCIMB 14021 / DFL 12)).